The following is a 38-amino-acid chain: Large ribosomal subunit protein bL36 (38 aa).

The protein belongs to the bacterial ribosomal protein bL36 family.

This is Large ribosomal subunit protein bL36 from Phytoplasma mali (strain AT).